We begin with the raw amino-acid sequence, 1323 residues long: MSSDEASSEALAQEDIKQITLRIKLPACISNEEDLEVPSLLSETLADIRETLNLSAATQNLTNFNVFYQDINLSENFDDLVPLNDILTELGVGEIDSLNLVLKEKPYNLAAIYDHLNKFREVIGLHFLDKYSSEVGVLSGVSKFGDIDLQDVKETEPETQDDKDKETDETKSTKEDSNQTEEKKSEIVFTAEEKQQIGKITDELISGNTPSLVEFGTFDNISGSIKTPIKSLTVSQWSPVPSFQKLKGDLLYITLQTLENETLNITCHLSGFFVNKSSTINFNPAIKMNENGKVHKDYLLINLVDSLSPSFSKTIQENELVLSRSSKHPESFLIPSNSLMSSPWIVNPSKFANQPDASRSQLPLISNGVDGSGFVKEWNEDFQAIRELPNSTINERILREKLLMKSLHEFNKVATETAMNVIKGNLTPLNPNEPKDYHIYLRNGIFYSLGVNATGAFDCTGGNEAARYTSSKDLAAIKLLNRIDAKGIYNLVTCIVDYMGQRVICQAPVPGILDSSHEDENEEEPTDKVCYGLSTDGSKIFSDSSFENVLKPIAEAFHLKPHPVTLLDNVKSQGDLITSKDIKGVKGTDERKYIIDLYRATPLDIEFIESNWDESKETSYPHRETALRHEAVEEWWKRKVSVLFKAETERLEKEGKLESKDGEKPQIVLPSDQITINTDAFTTIDESSDDQNEVREVSKFIKEHLIEEFLEENSKQISPFDGNHLTSMLHKQGINLRYLGHIAEQACVRKDEHLKKITEARKVNEEEISKRKEESEKKATEGKDQDKEEEKANDNEKNKEDDKEEVSNGEFEPIVANFDSLYRISVQEMVARSVKHLLRKISADIPVYLIPAFVSHFHNCLLGSEINSSPECIIDETLKGFYNATELEFTKLNSNKVIALVANEVLIRFRYELPTDWISTLIRPFQLFREIAIKYGIQWKSQEYAFTNEEFEKVKDKLAVETQVFEAKTSKHKKNKKQQSQLITKSVDRTTIFVTDDIVNFVPIVKDSTYRSSLVDEIFETARAQIFKGETETGINLLNNLLSVYEQIYGRVHPETSKFYGLLSQYYAELGLKSEACNIARKACILAERTTGFDSYESITAYINSAFFESTNDDYINALNLYNKAINDWTLVYGDGHPSSVNTYANLAELLSEHKLFQQANKLFEKAISISTKLNGEESQICGMLRYRYGGTLLGGGDFKSALDQFKSANDIFTKFIGPDDQLSKKSLSFVTNISTYLAYNEHQKSEQKKALAQQASASNGKVKAKSAVEQQLKSSKKGKKNDATQPNPEIASKSVDDILQYIEGKNPKKQLKKKSNNKKSKK.

A TPR 1 repeat occupies 103–141 (KEKPYNLAAIYDHLNKFREVIGLHFLDKYSSEVGVLSGV). A disordered region spans residues 149–186 (LQDVKETEPETQDDKDKETDETKSTKEDSNQTEEKKSE). Residues 150-186 (QDVKETEPETQDDKDKETDETKSTKEDSNQTEEKKSE) show a composition bias toward basic and acidic residues. A Clu domain is found at 351–608 (FANQPDASRS…RATPLDIEFI (258 aa)). A TPR 2 repeat occupies 530-563 (CYGLSTDGSKIFSDSSFENVLKPIAEAFHLKPHP). The segment covering 764–801 (NEEEISKRKEESEKKATEGKDQDKEEEKANDNEKNKED) has biased composition (basic and acidic residues). Positions 764–808 (NEEEISKRKEESEKKATEGKDQDKEEEKANDNEKNKEDDKEEVSN) are disordered. TPR repeat units follow at residues 1042–1076 (LSVY…KSEA), 1099–1132 (ITAY…WTLV), 1141–1174 (VNTY…STKL), and 1183–1216 (GMLR…FTKF). The segment at 1250–1323 (KALAQQASAS…KKSNNKKSKK (74 aa)) is disordered. Residues 1308–1323 (PKKQLKKKSNNKKSKK) show a composition bias toward basic residues.

This sequence belongs to the CLU family. As to quaternary structure, may associate with the eukaryotic translation initiation factor 3 (eIF-3) complex.

It is found in the cytoplasm. MRNA-binding protein involved in proper cytoplasmic distribution of mitochondria. In Debaryomyces hansenii (strain ATCC 36239 / CBS 767 / BCRC 21394 / JCM 1990 / NBRC 0083 / IGC 2968) (Yeast), this protein is Clustered mitochondria protein homolog.